Consider the following 899-residue polypeptide: CNK3/IPCEF1 fusion protein (899 aa).

Residues 7-72 (WSPKQVVDWT…LEAVDLLCAL (66 aa)) enclose the SAM domain. The CRIC domain maps to 80 to 174 (NMKNLVLKLR…TTVQKDCFVA (95 aa)). Residues 211–293 (EVHLPNIKPG…GVVLLLKKRP (83 aa)) enclose the PDZ domain. 2 disordered regions span residues 309 to 334 (WKPP…DTSL) and 347 to 390 (PPPP…FLDQ). The DUF1170 domain maps to 332-457 (TSLKKEKSAI…ARPRGHGRKA (126 aa)). A Phosphoserine modification is found at Ser-383. Positions 503–602 (HADCQGWLYK…WLNKLGSAVI (100 aa)) constitute a PH domain. 3 disordered regions span residues 605-687 (ESTT…PDTV), 735-770 (LSSD…TKVS), and 868-899 (QQQR…ENSI). Positions 613-624 (CYSESEQEDPEI) are enriched in acidic residues. The span at 634–662 (ASQTQSLTAQQASSSSPSLSGTSYSFSSL) shows a compositional bias: low complexity. The segment covering 663–676 (ENTVKTPSSFPSSL) has biased composition (polar residues). A compositionally biased stretch (low complexity) spans 735-745 (LSSDDTSSLSS). The span at 761-770 (IMDKEETKVS) shows a compositional bias: basic and acidic residues. A required for interaction with CYTH2 region spans residues 851 to 899 (KYREWKVMNTLLIQDIYQQQRASPAPDDTDDTPQELKKSPSSPSVENSI). Position 873 is a phosphoserine (Ser-873). Residues 889–899 (SPSSPSVENSI) are compositionally biased toward polar residues.

The protein belongs to the CNKSR family.

In terms of biological role, required for hepatocyte growth factor (HGF)-dependent activation of Arf6 and HGF-stimulated cell migration. The polypeptide is CNK3/IPCEF1 fusion protein (CNK3/IPCEF1) (Homo sapiens (Human)).